We begin with the raw amino-acid sequence, 259 residues long: Ribosomal RNA small subunit methyltransferase J (259 aa).

Residues 101 to 102, 117 to 118, 153 to 154, and Asp176 contribute to the S-adenosyl-L-methionine site; these read RD, ER, and SS.

It belongs to the methyltransferase superfamily. RsmJ family.

Its subcellular location is the cytoplasm. It catalyses the reaction guanosine(1516) in 16S rRNA + S-adenosyl-L-methionine = N(2)-methylguanosine(1516) in 16S rRNA + S-adenosyl-L-homocysteine + H(+). Functionally, specifically methylates the guanosine in position 1516 of 16S rRNA. The chain is Ribosomal RNA small subunit methyltransferase J from Aliivibrio fischeri (strain MJ11) (Vibrio fischeri).